Reading from the N-terminus, the 307-residue chain is Synaptophysin (307 aa).

Residues 1 to 19 (MDVVNQLVAGGQFRVVKEP) lie on the Cytoplasmic side of the membrane. The 208-residue stretch at 15-222 (VVKEPLGFVK…NLWFVFKETG (208 aa)) folds into the MARVEL domain. The helical transmembrane segment at 20-43 (LGFVKVLQWVFAIFAFATCGSYTG) threads the bilayer. At 44-101 (ELRLSVECANKTESALNIEVEFEYPFRLHQVYFDAPSCVKGGTTKIFLVGDYSSSAEF) the chain is on the vesicular side. The N-linked (GlcNAc...) asparagine glycan is linked to N53. Phosphotyrosine is present on Y75. Residues 102 to 125 (FVTVAVFAFLYSMGALATYIFLQN) form a helical membrane-spanning segment. Residues 126–132 (KYRENNK) lie on the Cytoplasmic side of the membrane. Residues 133-156 (GPMMDFLATAVFAFMWLVSSSAWA) form a helical membrane-spanning segment. Over 157-194 (KGLSDVKMATDPENIIKEMPMCRQTGNTCKELRDPVTS) the chain is Vesicular. The chain crosses the membrane as a helical span at residues 195-218 (GLNTSVVFGFLNLVLWVGNLWFVF). Topologically, residues 219 to 307 (KETGWAAPFM…GAPTSFSNQM (89 aa)) are cytoplasmic. T221 bears the Phosphothreonine mark. Positions 233-307 (GAPEKQPAPG…GAPTSFSNQM (75 aa)) are disordered. Positions 248-258 (AGYGQGPGGYG) are enriched in gly residues. The interval 249 to 298 (GYGQGPGGYGPQDSYGPQGGYQPDYGQPASGGGGYGPQGDYGQQGYGQQG) is repeats, Gly-rich. A compositionally biased stretch (low complexity) spans 259 to 276 (PQDSYGPQGGYQPDYGQP). A phosphotyrosine mark is found at Y273 and Y289. Residues 277 to 296 (ASGGGGYGPQGDYGQQGYGQ) are compositionally biased toward gly residues.

This sequence belongs to the synaptophysin/synaptobrevin family. As to quaternary structure, homohexamer or homotetramer. Interacts with SRCIN1. Interacts with VAMP2; the interaction is inhibited by interaction of VAPM2 with SEPT8. Post-translationally, ubiquitinated; mediated by SIAH1 or SIAH2 and leading to its subsequent proteasomal degradation. In terms of processing, phosphorylated by SRC. As to expression, expressed in the brain with expression in the cerebrum and the cerebellum.

It localises to the cytoplasmic vesicle. Its subcellular location is the secretory vesicle. It is found in the synaptic vesicle membrane. The protein resides in the synapse. The protein localises to the synaptosome. Its function is as follows. Possibly involved in structural functions as organizing other membrane components or in targeting the vesicles to the plasma membrane. Involved in the regulation of short-term and long-term synaptic plasticity. This is Synaptophysin (Syp) from Rattus norvegicus (Rat).